Here is a 282-residue protein sequence, read N- to C-terminus: MEMO1 family protein Msm_1438 (282 aa).

The protein belongs to the MEMO1 family.

This Methanobrevibacter smithii (strain ATCC 35061 / DSM 861 / OCM 144 / PS) protein is MEMO1 family protein Msm_1438.